A 229-amino-acid polypeptide reads, in one-letter code: Uracil-DNA glycosylase (229 aa).

The active-site Proton acceptor is the aspartate 67.

The protein belongs to the uracil-DNA glycosylase (UDG) superfamily. UNG family.

The protein localises to the cytoplasm. It catalyses the reaction Hydrolyzes single-stranded DNA or mismatched double-stranded DNA and polynucleotides, releasing free uracil.. In terms of biological role, excises uracil residues from the DNA which can arise as a result of misincorporation of dUMP residues by DNA polymerase or due to deamination of cytosine. This chain is Uracil-DNA glycosylase, found in Coxiella burnetii (strain CbuK_Q154) (Coxiella burnetii (strain Q154)).